The chain runs to 406 residues: O-succinylhomoserine sulfhydrylase (406 aa).

The residue at position 219 (K219) is an N6-(pyridoxal phosphate)lysine.

It belongs to the trans-sulfuration enzymes family. MetZ subfamily. In terms of assembly, homotetramer. Pyridoxal 5'-phosphate serves as cofactor.

The enzyme catalyses O-succinyl-L-homoserine + hydrogen sulfide = L-homocysteine + succinate. It functions in the pathway amino-acid biosynthesis; L-methionine biosynthesis via de novo pathway; L-homocysteine from O-succinyl-L-homoserine: step 1/1. In terms of biological role, catalyzes the formation of L-homocysteine from O-succinyl-L-homoserine (OSHS) and hydrogen sulfide. The protein is O-succinylhomoserine sulfhydrylase of Mycobacterium tuberculosis (strain CDC 1551 / Oshkosh).